Here is a 984-residue protein sequence, read N- to C-terminus: Vacuolar sorting protein 3 (984 aa).

The 319-residue stretch at Lys-21 to Asp-339 folds into the CNH domain. The stretch at Val-663–Pro-844 is one CHCR repeat.

This sequence belongs to the TRAP1 family. As to quaternary structure, component of the class C core vacuole/endosome tethering (CORVET) complex. Their common core is composed of the class C Vps core proteins VPS11, VCL1, VPS18 and VPS33, which in CORVET further associates with VPS3. Interacts directly with VPS11. Binds to RABF2A and RABF2B.

It localises to the endosome membrane. The protein localises to the cytoplasm. Its function is as follows. Essential protein required during embryogenesis. Believed to act as a component of the putative class C core vacuole/endosome tethering (CORVET) endosomal tethering complexes. CORVET is required for vacuolar transport of SYP22. Involved in root development. Plays a role in vesicle-mediated protein trafficking of the endocytic membrane transport pathway. The chain is Vacuolar sorting protein 3 from Arabidopsis thaliana (Mouse-ear cress).